A 358-amino-acid chain; its full sequence is Heme A synthase (358 aa).

Transmembrane regions (helical) follow at residues 25-45 (LVRY…MVGG), 111-131 (LLAR…WLTG), 141-161 (MLGL…MVAS), 176-196 (IHLT…RGLV), 210-230 (FAGW…LVAG), 269-289 (VQFV…LHAV), 304-324 (TIVL…TLLM), and 326-346 (APLH…AFAV). His-273 lines the heme pocket. His-334 contributes to the heme binding site.

Belongs to the COX15/CtaA family. Type 2 subfamily. Interacts with CtaB. Heme b is required as a cofactor.

Its subcellular location is the cell membrane. The enzyme catalyses Fe(II)-heme o + 2 A + H2O = Fe(II)-heme a + 2 AH2. Its pathway is porphyrin-containing compound metabolism; heme A biosynthesis; heme A from heme O: step 1/1. Functionally, catalyzes the conversion of heme O to heme A by two successive hydroxylations of the methyl group at C8. The first hydroxylation forms heme I, the second hydroxylation results in an unstable dihydroxymethyl group, which spontaneously dehydrates, resulting in the formyl group of heme A. The sequence is that of Heme A synthase from Brucella suis (strain ATCC 23445 / NCTC 10510).